Here is a 526-residue protein sequence, read N- to C-terminus: Peptide chain release factor 3 (526 aa).

The tr-type G domain occupies 9–277 (DKRRTFAIIS…GIVEWAPKPL (269 aa)). Residues 18–25 (SHPDAGKT), 86–90 (DTPGH), and 140–143 (NKCD) contribute to the GTP site.

This sequence belongs to the TRAFAC class translation factor GTPase superfamily. Classic translation factor GTPase family. PrfC subfamily.

The protein resides in the cytoplasm. In terms of biological role, increases the formation of ribosomal termination complexes and stimulates activities of RF-1 and RF-2. It binds guanine nucleotides and has strong preference for UGA stop codons. It may interact directly with the ribosome. The stimulation of RF-1 and RF-2 is significantly reduced by GTP and GDP, but not by GMP. This is Peptide chain release factor 3 from Shewanella frigidimarina (strain NCIMB 400).